We begin with the raw amino-acid sequence, 206 residues long: LexA repressor (206 aa).

Positions Arg-28 to Lys-48 form a DNA-binding region, H-T-H motif. Active-site for autocatalytic cleavage activity residues include Ser-123 and Lys-160.

This sequence belongs to the peptidase S24 family. As to quaternary structure, homodimer.

It carries out the reaction Hydrolysis of Ala-|-Gly bond in repressor LexA.. Its function is as follows. Represses a number of genes involved in the response to DNA damage (SOS response), including recA and lexA. In the presence of single-stranded DNA, RecA interacts with LexA causing an autocatalytic cleavage which disrupts the DNA-binding part of LexA, leading to derepression of the SOS regulon and eventually DNA repair. The chain is LexA repressor from Vibrio parahaemolyticus serotype O3:K6 (strain RIMD 2210633).